Here is a 316-residue protein sequence, read N- to C-terminus: Probable protein-L-isoaspartate O-methyltransferase (316 aa).

Residues 103-106 (ATIS), histidine 111, serine 136, 157-158 (EH), 187-188 (DG), threonine 263, and glutamine 268 each bind S-adenosyl-L-homocysteine. Residue serine 106 is part of the active site.

The protein belongs to the methyltransferase superfamily. L-isoaspartyl/D-aspartyl protein methyltransferase family.

The protein localises to the cytoplasm. The protein resides in the cytosol. The catalysed reaction is [protein]-L-isoaspartate + S-adenosyl-L-methionine = [protein]-L-isoaspartate alpha-methyl ester + S-adenosyl-L-homocysteine. Functionally, initiates the repair of damaged proteins by catalyzing methyl esterification of L-isoaspartyl and D-aspartyl residues produced by spontaneous isomerization and racemization of L-aspartyl and L-asparaginyl residues in aging peptides and proteins. The chain is Probable protein-L-isoaspartate O-methyltransferase (pcmA) from Dictyostelium discoideum (Social amoeba).